The primary structure comprises 70 residues: Putative ankyrin repeat protein RC0502 (70 aa).

The stretch at 9 to 43 (KGRIPIHYATYSKQHEITQILILLQPGSEIDTVDN) is one ANK repeat.

This Rickettsia conorii (strain ATCC VR-613 / Malish 7) protein is Putative ankyrin repeat protein RC0502.